A 236-amino-acid polypeptide reads, in one-letter code: MGQKIHPLGFRLGVTQNHHSTWFAPLNNYSELLKEDERIRNCIQQYVRKYVRSSSRSAEIARVQIQKKTDLVEVQIHTASPSLLVQTRVPNRSTNTQEIGIEYLRRNIQNTLNPGNRKLNMTLSQVAKPYGEAIILAEYIALQLESRVAFRKTMKQAIKLANKSGNARGIKIQIAGRLNGAEIARVEWAREGRVPLHTLRAQIDYCHYPAQTIYGVLGIKVWVFQNKSLISNNQQM.

In terms of domain architecture, KH type-2 spans 47–127 (VRKYVRSSSR…KLNMTLSQVA (81 aa)).

It belongs to the universal ribosomal protein uS3 family. Part of the 30S ribosomal subunit.

It is found in the plastid. It localises to the chloroplast. The protein is Small ribosomal subunit protein uS3c (rps3) of Zygnema circumcarinatum (Green alga).